The sequence spans 372 residues: Putative aminopeptidase SgcX (372 aa).

Residues histidine 67 and aspartate 180 each coordinate a divalent metal cation. Glutamate 212 (proton acceptor) is an active-site residue. The a divalent metal cation site is built by glutamate 213, aspartate 235, and histidine 329.

Belongs to the peptidase M42 family. It depends on a divalent metal cation as a cofactor.

The sequence is that of Putative aminopeptidase SgcX (sgcX) from Salmonella typhi.